Consider the following 405-residue polypeptide: uncharacterized protein (405 aa).

Positions 1-34 are cleaved as a signal peptide; that stretch reads MNKFLKYFLILLALVLIVVPIVFATLLFKTSQDA. The segment covering 348-359 has biased composition (basic and acidic residues); that stretch reads EQNDTTDKDKTS. The segment at 348–405 is disordered; that stretch reads EQNDTTDKDKTSNENSDSTNNSDSSNQQQPATDQNSNQNQGGTQQAPQASNNQNGVVN. Low complexity-rich tracts occupy residues 360–373 and 381–392; these read NENSDSTNNSDSSN and QNSNQNQGGTQQ. The segment covering 393–405 has biased composition (polar residues); sequence APQASNNQNGVVN.

The protein belongs to the LytR/CpsA/Psr (LCP) family.

This is an uncharacterized protein from Staphylococcus aureus (strain NCTC 8325 / PS 47).